A 657-amino-acid polypeptide reads, in one-letter code: Pentatricopeptide repeat-containing protein At1g11710, mitochondrial (657 aa).

Residues 1–74 (MFGHVFSRRT…REFRSSPKLA (74 aa)) constitute a mitochondrion transit peptide. PPR repeat units lie at residues 147 to 181 (SPDV…GFCV), 182 to 216 (SVHA…GYVE), 217 to 251 (NVNT…GVWP), 252 to 282 (NVVS…MGMM), 290 to 324 (NAVT…GVDC), 325 to 359 (NERT…GLVV), 360 to 394 (NTVI…NMQI), 395 to 429 (DRFT…KLVE), 430 to 464 (DIVC…GLSL), 465 to 499 (DAIS…NKTS), 500 to 530 (NLVI…MEIK), 531 to 565 (DIVT…DGEK), 568 to 602 (SLVT…GVVP), and 603 to 637 (DSIT…GVTP).

The protein belongs to the PPR family. P subfamily.

The protein localises to the mitochondrion. This Arabidopsis thaliana (Mouse-ear cress) protein is Pentatricopeptide repeat-containing protein At1g11710, mitochondrial.